Reading from the N-terminus, the 828-residue chain is MLFGVKLANEVYPPWKGSYINYEGLKKFLKEDSVKDGSNDKKARWDDSDESKFVEELDKELEKVYGFQLKKYNNLMERLSHLEKQTDTEAAIKALDADAFQRVLEELLSESTELDNFKRLNFTGFAKIVKKHDKLYPKYPSVKSLLEVRLKELPSHSEEYSPLLYRISFLYNILRSNFNTASEPLASASKFSSIVSNDIDMNFRSFKFWVHNDNLMEVKTRILRHLPVLVYANVPSENDDLVNRFESDISNNDEIVGSSSSTSSVEHGLGARSFDPLINTLYFDNEHFELYNDKLLKLNSAPTLRLRWTGQLSDKPDIFLEKKTLIEDEATGKSEFDLTKLQLKQKFINGFIFEGDKKFKEQTLKKLKESGTAGRDLERLEEDFSEIQNFIIKNELQPVFRTVYTRTAFQIPGDDKIRVTIDSNIVFIKEDSFDRERPIRDPNTWHRTDIDANVANPLKFLRGGEYAKFPYSVMEIKVKSSLDSSMSASSMISNVKLPKKHGQWLNDLTNSHLVKEIPKFSIFVQGVASLYGDDEKLDILPFWLPDLETDIRQDPKQAYEEEKKKLLKQKEIQKKIDGMRRLSNLKEPQHQAAVPVSQEENERITSQGDLEADGSSDEETEQEPHSKRSKKVRRRKPKATFLRILAGRDPKLMGVDSEEEEIELPPGVKKPLNLLKNAGPVNVEAKVWLANERTFNRWLSVTSLLSVLTFSIYNSVKKAEYPTLANYMAYVYFGLTIFCALWSYSIYMKRVDIIQQRSGQHLDAPLGPVLVSIVLFVTLVVNFVMAFRNAAKSRQELQIQNLEVPERIPEVLRPLQNYLFKLMGPSSD.

One can recognise an SPX domain in the interval 1-146 (MLFGVKLANE…PKYPSVKSLL (146 aa)). At 1 to 693 (MLFGVKLANE…EAKVWLANER (693 aa)) the chain is on the cytoplasmic side. The important for inositol polyphosphate binding stretch occupies residues 127–134 (KIVKKHDK). A phosphoserine mark is found at serine 182, serine 187, serine 196, serine 264, serine 583, serine 615, and serine 616. Residues 580–636 (RRLSNLKEPQHQAAVPVSQEENERITSQGDLEADGSSDEETEQEPHSKRSKKVRRRK) are disordered. A compositionally biased stretch (acidic residues) spans 610–621 (LEADGSSDEETE). Position 620 is a phosphothreonine (threonine 620). Serine 626 carries the phosphoserine modification. The span at 627–636 (KRSKKVRRRK) shows a compositional bias: basic residues. Serine 657 bears the Phosphoserine mark. Residues 694–716 (TFNRWLSVTSLLSVLTFSIYNSV) traverse the membrane as a helical segment. The Vacuolar portion of the chain corresponds to 717–727 (KKAEYPTLANY). The helical transmembrane segment at 728–748 (MAYVYFGLTIFCALWSYSIYM) threads the bilayer. Over 749-766 (KRVDIIQQRSGQHLDAPL) the chain is Cytoplasmic. The helical transmembrane segment at 767 to 787 (GPVLVSIVLFVTLVVNFVMAF) threads the bilayer. The Vacuolar segment spans residues 788-828 (RNAAKSRQELQIQNLEVPERIPEVLRPLQNYLFKLMGPSSD).

The protein belongs to the VTC2/3 family. The VTC core complex is an integral membrane heterooligomer composed of the catalytic subunit VTC4 and the accessory subunits VTC1, VTC2 and VTC3. The complex exists in 2 different sub-complexes: VTC1-VTC2-VCT4 and VCT1-VTC3-VTC4. The VCT1-VTC3-VTC4 subcomplex is mostly found on the vacuolar membrane. The VTC1-VTC2-VCT4 subcomplex is observed in the cell periphery, probably ER and nuclear envelope, but localizes to the vacuole under phosphate starvation. Each subunit contains 3 transmembrane helices. VTC1 is a small membrane protein without hydrophilic domain. VTC2, VTC3 and VTC4 are related and have 2 hydrophilic domains that face the cytosol, an N-terminal SPX domain and the central core domain. The central core in VTC4 is the catalytic domain, with the essential catalytic lysine replaced by isoleucine and leucine in VTC2 and VTC3, respectively. The core complex associates with the accessory subunit VTC5. The complex interacts with the v-SNARE NYV1 and with the V(0) subunit of V-ATPase VPH1.

The protein resides in the vacuole membrane. The protein localises to the cytoplasm. It is found in the cell cortex. It localises to the endoplasmic reticulum membrane. Its subcellular location is the cytoplasmic vesicle. The protein resides in the autophagosome membrane. Its function is as follows. Accessory subunit of the vacuolar transporter chaperone (VTC) complex. The VTC complex acts as a vacuolar polyphosphate polymerase that catalyzes the synthesis of inorganic polyphosphate (polyP) via transfer of phosphate from ATP to a growing polyP chain, releasing ADP. VTC exposes its catalytic domain VTC4 to the cytosol, where the growing polyP chain winds through a tunnel-shaped pocket, integrating cytoplasmic polymer synthesis with polyP membrane translocation. The VTC complex carries 9 vacuolar transmembrane domains, which are likely to constitute the translocation channel into the organelle lumen. PolyP synthesis is tightly coupled to its transport into the vacuole lumen, in order to avoid otherwise toxic intermediates in the cytosol, and it depends on the proton gradient across the membrane, formed by V-ATPase. Binds inositol hexakisphosphate (Ins6P) and similar inositol polyphosphates, such as 5-diphospho-inositol pentakisphosphate (5-InsP7); these are important intracellular signaling molecules. Inositol polyphosphate binding promotes vacuolar polyphosphate synthesis. The VTC complex also plays a role in vacuolar membrane fusion. Required for SEC18/NSF activity in SNARE priming, membrane binding of LMA1 and V(0) trans-complex formation. The polypeptide is Vacuolar transporter chaperone complex subunit 2 (Saccharomyces cerevisiae (strain ATCC 204508 / S288c) (Baker's yeast)).